A 528-amino-acid polypeptide reads, in one-letter code: MAGGGGAERVRVGAAAAGLLPPSCRQPRRRESRERLSVCSKLCYAVGGAPYQTTGCALGFFLQIYLLDVAQLDPFYASIILFVGRAWDAITDPMVGFFISKTPWTRFGRLMPWIIFSTPFAVISYFLIWFVPDISTGQVMWYLIFYCIFQTLVTCFHVPYSALTMFISREQSERDSATAYRMTVEVLGTVLGTAIQGQIVGKAVTPCIENPPFLSETNFSVAIRNVNMTHYTGSLADTRNAYMVAAGVIGGLYILCAVILSVGVREKRESSELQSDEPVSFFRGLKLVMNHGAYIKLITGFLFTSLAFMLLEGNFALFCTYTLGFRNEFQNILLAIMLSATLTIPFWQWFLTRFGKKTAVYVGISSAVPFLITVVVLDSNLVVTYIVAVAAGISVAAAFLLPWSMLPDVIDDFKLQHPESRGHEAIFFSFYVFFTKFTSGVSLGISTLSLDFAGYQTRGCSQPSEVNITLKLLVSAVPVGLILLGLLLFKLYPIDEEKRRENKKALQDLREESNSSSESDSTELANIV.

Topologically, residues 1–37 are cytoplasmic; the sequence is MAGGGGAERVRVGAAAAGLLPPSCRQPRRRESRERLS. The helical transmembrane segment at 38-66 threads the bilayer; that stretch reads VCSKLCYAVGGAPYQTTGCALGFFLQIYL. Topologically, residues 67–73 are extracellular; sequence LDVAQLD. The chain crosses the membrane as a helical span at residues 74 to 99; sequence PFYASIILFVGRAWDAITDPMVGFFI. At 100-109 the chain is on the cytoplasmic side; sequence SKTPWTRFGR. Residues 110–129 traverse the membrane as a helical segment; it reads LMPWIIFSTPFAVISYFLIW. Residues 130–138 lie on the Extracellular side of the membrane; the sequence is FVPDISTGQ. Residues 139 to 161 form a helical membrane-spanning segment; it reads VMWYLIFYCIFQTLVTCFHVPYS. Over 162 to 176 the chain is Cytoplasmic; the sequence is ALTMFISREQSERDS. A helical membrane pass occupies residues 177-199; it reads ATAYRMTVEVLGTVLGTAIQGQI. Residues 200-241 are Extracellular-facing; it reads VGKAVTPCIENPPFLSETNFSVAIRNVNMTHYTGSLADTRNA. Cysteines 207 and 460 form a disulfide. N-linked (GlcNAc...) asparagine glycans are attached at residues Asn218 and Asn227. A helical transmembrane segment spans residues 242–263; the sequence is YMVAAGVIGGLYILCAVILSVG. The Cytoplasmic segment spans residues 264-295; sequence VREKRESSELQSDEPVSFFRGLKLVMNHGAYI. The chain crosses the membrane as a helical span at residues 296-319; the sequence is KLITGFLFTSLAFMLLEGNFALFC. Topologically, residues 320-328 are extracellular; that stretch reads TYTLGFRNE. A helical transmembrane segment spans residues 329–351; sequence FQNILLAIMLSATLTIPFWQWFL. Residues 352–355 lie on the Cytoplasmic side of the membrane; that stretch reads TRFG. The helical transmembrane segment at 356 to 376 threads the bilayer; the sequence is KKTAVYVGISSAVPFLITVVV. Residues 377–381 lie on the Extracellular side of the membrane; sequence LDSNL. Residues 382-404 form a helical membrane-spanning segment; that stretch reads VVTYIVAVAAGISVAAAFLLPWS. Residues 405-427 are Cytoplasmic-facing; sequence MLPDVIDDFKLQHPESRGHEAIF. A helical membrane pass occupies residues 428 to 450; it reads FSFYVFFTKFTSGVSLGISTLSL. Residues 451 to 467 are Extracellular-facing; that stretch reads DFAGYQTRGCSQPSEVN. The chain crosses the membrane as a helical span at residues 468-490; the sequence is ITLKLLVSAVPVGLILLGLLLFK. Residues 491–528 are Cytoplasmic-facing; sequence LYPIDEEKRRENKKALQDLREESNSSSESDSTELANIV. The span at 503-513 shows a compositional bias: basic and acidic residues; sequence KKALQDLREES. Positions 503 to 528 are disordered; it reads KKALQDLREESNSSSESDSTELANIV. Residues 514-528 are compositionally biased toward low complexity; it reads NSSSESDSTELANIV.

Belongs to the major facilitator superfamily.

The protein localises to the cell membrane. The protein resides in the endoplasmic reticulum membrane. It carries out the reaction a 1-acyl-sn-glycero-3-phosphocholine(in) + Na(+)(in) = a 1-acyl-sn-glycero-3-phosphocholine(out) + Na(+)(out). It catalyses the reaction 1-(4Z,7Z,10Z,13Z,16Z,19Z-docosahexaenoyl)-sn-glycero-3-phosphocholine(in) + Na(+)(in) = 1-(4Z,7Z,10Z,13Z,16Z,19Z-docosahexaenoyl)-sn-glycero-3-phosphocholine(out) + Na(+)(out). The catalysed reaction is 1-(9Z-octadecenoyl)-sn-glycero-3-phosphocholine(in) + Na(+)(in) = 1-(9Z-octadecenoyl)-sn-glycero-3-phosphocholine(out) + Na(+)(out). The enzyme catalyses 1-hexadecanoyl-sn-glycero-3-phosphocholine(in) + Na(+)(in) = 1-hexadecanoyl-sn-glycero-3-phosphocholine(out) + Na(+)(out). It carries out the reaction a 1-acyl-sn-glycero-3-phosphoethanolamine(in) + Na(+)(in) = a 1-acyl-sn-glycero-3-phosphoethanolamine(out) + Na(+)(out). Its function is as follows. Sodium-dependent lysophosphatidylcholine (LPC) symporter, which plays an essential role for blood-brain barrier formation and function. Specifically expressed in endothelium of the blood-brain barrier of micro-vessels and transports LPC into the brain. Transport of LPC is essential because it constitutes the major mechanism by which docosahexaenoic acid (DHA), an omega-3 fatty acid that is essential for normal brain growth and cognitive function, enters the brain. Transports LPC carrying long-chain fatty acids such LPC oleate and LPC palmitate with a minimum acyl chain length of 14 carbons. Does not transport docosahexaenoic acid in unesterified fatty acid. The polypeptide is Sodium-dependent lysophosphatidylcholine symporter 1 (Gallus gallus (Chicken)).